Consider the following 143-residue polypeptide: Small ribosomal subunit protein uS11c (143 aa).

Belongs to the universal ribosomal protein uS11 family. Part of the 30S ribosomal subunit.

It is found in the plastid. Its subcellular location is the chloroplast. This chain is Small ribosomal subunit protein uS11c, found in Zea mays (Maize).